Consider the following 66-residue polypeptide: Alpha-like toxin BeM9 (66 aa).

The LCN-type CS-alpha/beta domain maps to 2–66 (RDAYIAKPHN…VPIRIPGKCH (65 aa)). 4 disulfide bridges follow: C12-C65, C16-C38, C24-C48, and C28-C50.

Belongs to the long (4 C-C) scorpion toxin superfamily. Sodium channel inhibitor family. Alpha subfamily. In terms of tissue distribution, expressed by the venom gland.

Its subcellular location is the secreted. Functionally, alpha toxins bind voltage-independently at site-3 of sodium channels (Nav) and inhibit the inactivation of the activated channels, thereby blocking neuronal transmission. This toxin is active on both mammals and insects, since it inhibits inactivation of rNav1.4/SCN4A, hNav1.5/SCN5A, mNav1.6/SCN8A and insect BgNav1 and DmNav1 channels. In vivo, it shows paralytic activity in mice. The sequence is that of Alpha-like toxin BeM9 from Mesobuthus eupeus (Lesser Asian scorpion).